A 533-amino-acid polypeptide reads, in one-letter code: D-3-phosphoglycerate dehydrogenase (533 aa).

Ala2 is subject to N-acetylalanine. Ser14 is subject to Phosphoserine. Residue Lys58 is modified to N6-acetyllysine. Residues Thr78, 155–156 (RI), Asp175, Thr207, 234–236 (CAR), and Asp260 contribute to the NAD(+) site. Thr78 carries the phosphothreonine modification. Arg236 is an active-site residue. The active site involves Glu265. His283 serves as the catalytic Proton donor. 283–286 (HLGA) serves as a coordination point for NAD(+).

It belongs to the D-isomer specific 2-hydroxyacid dehydrogenase family. As to quaternary structure, homotetramer.

It catalyses the reaction (2R)-3-phosphoglycerate + NAD(+) = 3-phosphooxypyruvate + NADH + H(+). The catalysed reaction is (R)-2-hydroxyglutarate + NAD(+) = 2-oxoglutarate + NADH + H(+). It carries out the reaction (S)-malate + NAD(+) = oxaloacetate + NADH + H(+). It participates in amino-acid biosynthesis; L-serine biosynthesis; L-serine from 3-phospho-D-glycerate: step 1/3. Functionally, catalyzes the reversible oxidation of 3-phospho-D-glycerate to 3-phosphonooxypyruvate, the first step of the phosphorylated L-serine biosynthesis pathway. Also catalyzes the reversible oxidation of 2-hydroxyglutarate to 2-oxoglutarate and the reversible oxidation of (S)-malate to oxaloacetate. The sequence is that of D-3-phosphoglycerate dehydrogenase (PHGDH) from Sus scrofa (Pig).